Consider the following 469-residue polypeptide: Signal recognition particle 54 kDa protein (469 aa).

GTP contacts are provided by residues 104–111 (GLYGSGKT), 184–188 (DTAGR), and 242–245 (TKLD). 2 disordered regions span residues 388-410 (ELEN…SGKP) and 447-469 (QQGG…PFGD). A compositionally biased stretch (gly residues) spans 448–469 (QGGGGGGGMGGMGGGGMGPFGD).

It belongs to the GTP-binding SRP family. SRP54 subfamily. As to quaternary structure, part of the signal recognition particle protein translocation system, which is composed of SRP and FtsY. Archaeal SRP consists of a 7S RNA molecule of 300 nucleotides and two protein subunits: SRP54 and SRP19.

Its subcellular location is the cytoplasm. It catalyses the reaction GTP + H2O = GDP + phosphate + H(+). Its function is as follows. Involved in targeting and insertion of nascent membrane proteins into the cytoplasmic membrane. Binds to the hydrophobic signal sequence of the ribosome-nascent chain (RNC) as it emerges from the ribosomes. The SRP-RNC complex is then targeted to the cytoplasmic membrane where it interacts with the SRP receptor FtsY. The sequence is that of Signal recognition particle 54 kDa protein from Haloarcula marismortui (strain ATCC 43049 / DSM 3752 / JCM 8966 / VKM B-1809) (Halobacterium marismortui).